Consider the following 310-residue polypeptide: Olfactory receptor 10G2 (310 aa).

Topologically, residues M1–S29 are extracellular. The N-linked (GlcNAc...) asparagine glycan is linked to N6. A helical transmembrane segment spans residues L30–L50. Over L51–K58 the chain is Cytoplasmic. The chain crosses the membrane as a helical span at residues L59–S80. At V81 to A104 the chain is on the extracellular side. A disulfide bridge connects residues C102 and C194. Residues Q105 to Y125 traverse the membrane as a helical segment. The Cytoplasmic portion of the chain corresponds to D126–R144. The chain crosses the membrane as a helical span at residues L145–A165. The Extracellular segment spans residues T166–L202. Residues V203–S222 traverse the membrane as a helical segment. Topologically, residues Y223–A242 are cytoplasmic. The chain crosses the membrane as a helical span at residues F243–I263. Residues Y264–D274 lie on the Extracellular side of the membrane. The helical transmembrane segment at G275–L295 threads the bilayer. At R296–G310 the chain is on the cytoplasmic side.

This sequence belongs to the G-protein coupled receptor 1 family.

The protein localises to the cell membrane. In terms of biological role, odorant receptor. The polypeptide is Olfactory receptor 10G2 (OR10G2) (Homo sapiens (Human)).